Consider the following 304-residue polypeptide: Acetaldehyde dehydrogenase (304 aa).

C131 serves as the catalytic Acyl-thioester intermediate. Residues 162 to 170 (SAGPGTRKN) and N273 each bind NAD(+).

It belongs to the acetaldehyde dehydrogenase family.

It carries out the reaction acetaldehyde + NAD(+) + CoA = acetyl-CoA + NADH + H(+). The polypeptide is Acetaldehyde dehydrogenase (Polaromonas naphthalenivorans (strain CJ2)).